A 165-amino-acid chain; its full sequence is Neurotrophin-3 (165 aa).

A signal peptide spans 1–3 (IQS). Residues 4-119 (TSMDQGSLSE…VLNRTSRRKR (116 aa)) constitute a propeptide that is removed on maturation. Residues 32 to 61 (KVPKQAARTKDGTQTTAKKTEAEPEATANK) form a disordered region. Asparagine 112 is a glycosylation site (N-linked (GlcNAc...) asparagine).

The protein belongs to the NGF-beta family.

It is found in the secreted. In terms of biological role, seems to promote the survival of visceral and proprioceptive sensory neurons. This chain is Neurotrophin-3 (NTF3), found in Xenopeltis unicolor (Sunbeam snake).